Consider the following 313-residue polypeptide: Protein FixB (313 aa).

255–283 (LYLAVGISGQIQHMVGANASQTIFAINKD) lines the FAD pocket.

The protein belongs to the ETF alpha-subunit/FixB family. As to quaternary structure, heterodimer of FixA and FixB.

It functions in the pathway amine and polyamine metabolism; carnitine metabolism. Required for anaerobic carnitine reduction. May bring reductant to CaiA. In Escherichia coli O127:H6 (strain E2348/69 / EPEC), this protein is Protein FixB.